We begin with the raw amino-acid sequence, 160 residues long: 6,7-dimethyl-8-ribityllumazine synthase (160 aa).

5-amino-6-(D-ribitylamino)uracil is bound by residues Phe28, 62–64, and 86–88; these read ALE and AVI. A (2S)-2-hydroxy-3-oxobutyl phosphate-binding site is contributed by 91 to 92; it reads ET. The Proton donor role is filled by His94. Residue Asn119 participates in 5-amino-6-(D-ribitylamino)uracil binding. Residue Arg133 coordinates (2S)-2-hydroxy-3-oxobutyl phosphate.

Belongs to the DMRL synthase family.

It catalyses the reaction (2S)-2-hydroxy-3-oxobutyl phosphate + 5-amino-6-(D-ribitylamino)uracil = 6,7-dimethyl-8-(1-D-ribityl)lumazine + phosphate + 2 H2O + H(+). It functions in the pathway cofactor biosynthesis; riboflavin biosynthesis; riboflavin from 2-hydroxy-3-oxobutyl phosphate and 5-amino-6-(D-ribitylamino)uracil: step 1/2. Catalyzes the formation of 6,7-dimethyl-8-ribityllumazine by condensation of 5-amino-6-(D-ribitylamino)uracil with 3,4-dihydroxy-2-butanone 4-phosphate. This is the penultimate step in the biosynthesis of riboflavin. In Nitrosospira multiformis (strain ATCC 25196 / NCIMB 11849 / C 71), this protein is 6,7-dimethyl-8-ribityllumazine synthase.